The primary structure comprises 278 residues: tRNA pseudouridine synthase A (278 aa).

D51 (nucleophile) is an active-site residue. Y109 provides a ligand contact to substrate.

It belongs to the tRNA pseudouridine synthase TruA family. Homodimer.

It catalyses the reaction uridine(38/39/40) in tRNA = pseudouridine(38/39/40) in tRNA. In terms of biological role, formation of pseudouridine at positions 38, 39 and 40 in the anticodon stem and loop of transfer RNAs. This chain is tRNA pseudouridine synthase A, found in Paracidovorax citrulli (strain AAC00-1) (Acidovorax citrulli).